Consider the following 273-residue polypeptide: 4-hydroxy-tetrahydrodipicolinate reductase (273 aa).

NAD(+) is bound by residues 11-16 (GAGGRM) and E36. Residue R37 participates in NADP(+) binding. NAD(+)-binding positions include 100–102 (GTT) and 124–127 (AANY). The active-site Proton donor/acceptor is the H157. A (S)-2,3,4,5-tetrahydrodipicolinate-binding site is contributed by H158. Catalysis depends on K161, which acts as the Proton donor. 167–168 (GT) serves as a coordination point for (S)-2,3,4,5-tetrahydrodipicolinate.

The protein belongs to the DapB family.

It is found in the cytoplasm. It catalyses the reaction (S)-2,3,4,5-tetrahydrodipicolinate + NAD(+) + H2O = (2S,4S)-4-hydroxy-2,3,4,5-tetrahydrodipicolinate + NADH + H(+). The catalysed reaction is (S)-2,3,4,5-tetrahydrodipicolinate + NADP(+) + H2O = (2S,4S)-4-hydroxy-2,3,4,5-tetrahydrodipicolinate + NADPH + H(+). It participates in amino-acid biosynthesis; L-lysine biosynthesis via DAP pathway; (S)-tetrahydrodipicolinate from L-aspartate: step 4/4. Catalyzes the conversion of 4-hydroxy-tetrahydrodipicolinate (HTPA) to tetrahydrodipicolinate. The protein is 4-hydroxy-tetrahydrodipicolinate reductase of Acinetobacter baumannii (strain ACICU).